Consider the following 302-residue polypeptide: Pantothenate synthetase (302 aa).

47 to 54 (MGALHEGH) is an ATP binding site. Residue histidine 54 is the Proton donor of the active site. (R)-pantoate is bound at residue glutamine 79. Glutamine 79 lines the beta-alanine pocket. An ATP-binding site is contributed by 165 to 168 (GEKD). A (R)-pantoate-binding site is contributed by glutamine 171. Residues valine 194 and 202–205 (LSSR) each bind ATP.

Belongs to the pantothenate synthetase family. Homodimer.

The protein localises to the cytoplasm. The catalysed reaction is (R)-pantoate + beta-alanine + ATP = (R)-pantothenate + AMP + diphosphate + H(+). It functions in the pathway cofactor biosynthesis; (R)-pantothenate biosynthesis; (R)-pantothenate from (R)-pantoate and beta-alanine: step 1/1. In terms of biological role, catalyzes the condensation of pantoate with beta-alanine in an ATP-dependent reaction via a pantoyl-adenylate intermediate. The polypeptide is Pantothenate synthetase (Saccharopolyspora erythraea (strain ATCC 11635 / DSM 40517 / JCM 4748 / NBRC 13426 / NCIMB 8594 / NRRL 2338)).